A 162-amino-acid polypeptide reads, in one-letter code: MISEEKEYRPCVGIMLFNKQGNIFIGKRFDSDSYWQMPQGGVDEGEELEQAALRELLEEVGTDEAEVVAQNKEWIYYNLPEEVIPICWNGRYSGQKQRWFLMKFCGKDKDININYTDHPEFKEWRWQNVDDLVASAIPFKKEVYKKVIEEFSSIIKGSIYDS.

The Nudix hydrolase domain maps to 7–149; it reads EYRPCVGIML…KKEVYKKVIE (143 aa). The Nudix box motif lies at 40–61; the sequence is GGVDEGEELEQAALRELLEEVG.

The protein belongs to the Nudix hydrolase family. RppH subfamily. Requires a divalent metal cation as cofactor.

Functionally, accelerates the degradation of transcripts by removing pyrophosphate from the 5'-end of triphosphorylated RNA, leading to a more labile monophosphorylated state that can stimulate subsequent ribonuclease cleavage. The sequence is that of RNA pyrophosphohydrolase from Wolbachia pipientis subsp. Culex pipiens (strain wPip).